The sequence spans 350 residues: Nicotinate-nucleotide--dimethylbenzimidazole phosphoribosyltransferase (350 aa).

The Proton acceptor role is filled by glutamate 317.

It belongs to the CobT family.

The enzyme catalyses 5,6-dimethylbenzimidazole + nicotinate beta-D-ribonucleotide = alpha-ribazole 5'-phosphate + nicotinate + H(+). The protein operates within nucleoside biosynthesis; alpha-ribazole biosynthesis; alpha-ribazole from 5,6-dimethylbenzimidazole: step 1/2. Functionally, catalyzes the synthesis of alpha-ribazole-5'-phosphate from nicotinate mononucleotide (NAMN) and 5,6-dimethylbenzimidazole (DMB). The polypeptide is Nicotinate-nucleotide--dimethylbenzimidazole phosphoribosyltransferase (Shewanella oneidensis (strain ATCC 700550 / JCM 31522 / CIP 106686 / LMG 19005 / NCIMB 14063 / MR-1)).